The sequence spans 146 residues: Prolactin-inducible protein homolog (146 aa).

An N-terminal signal peptide occupies residues 1 to 28 (MRLLQLLFRASPATLLLVLCLQLGANKA). A Pyrrolidone carboxylic acid modification is found at Gln29. Cystine bridges form between Cys65–Cys91 and Cys89–Cys123. N-linked (GlcNAc...) asparagine glycosylation is present at Asn105.

Belongs to the PIP family. Monomer. Interacts with AZGP1.

The protein localises to the secreted. This chain is Prolactin-inducible protein homolog (PIP), found in Gorilla gorilla gorilla (Western lowland gorilla).